The sequence spans 444 residues: Multidrug resistance protein MdtA (444 aa).

A signal peptide spans 1-20 (MKSQSKRTSRLFVFVGVVVA). Polar residues predominate over residues 37-52 (NNTSGAQQSARGQDTS). 2 disordered regions span residues 37-60 (NNTS…RNTP) and 399-444 (PRSA…AEKS). The span at 409-419 (ASAEKAAAEAE) shows a compositional bias: low complexity. Residues 435–444 (ARSTTAAEKS) show a composition bias toward polar residues.

It belongs to the membrane fusion protein (MFP) (TC 8.A.1) family. In terms of assembly, part of a tripartite efflux system composed of MdtA, MdtB and MdtC.

It localises to the cell inner membrane. In Yersinia pseudotuberculosis serotype I (strain IP32953), this protein is Multidrug resistance protein MdtA.